The following is a 209-amino-acid chain: Probable GTP-binding protein EngB (209 aa).

The 175-residue stretch at 27 to 201 (SGVEIAFAGR…ATKLDSWFAE (175 aa)) folds into the EngB-type G domain. GTP is bound by residues 35-42 (GRSNAGKS), 62-66 (GRTQL), 80-83 (DLPG), 147-150 (TKAD), and 180-182 (YSA). Residues Ser-42 and Thr-64 each contribute to the Mg(2+) site.

This sequence belongs to the TRAFAC class TrmE-Era-EngA-EngB-Septin-like GTPase superfamily. EngB GTPase family. Mg(2+) serves as cofactor.

Its function is as follows. Necessary for normal cell division and for the maintenance of normal septation. This is Probable GTP-binding protein EngB from Glaesserella parasuis serovar 5 (strain SH0165) (Haemophilus parasuis).